The chain runs to 258 residues: Acyl-[acyl-carrier-protein]--UDP-N-acetylglucosamine O-acyltransferase (258 aa).

It belongs to the transferase hexapeptide repeat family. LpxA subfamily. In terms of assembly, homotrimer.

The protein resides in the cytoplasm. The enzyme catalyses a (3R)-hydroxyacyl-[ACP] + UDP-N-acetyl-alpha-D-glucosamine = a UDP-3-O-[(3R)-3-hydroxyacyl]-N-acetyl-alpha-D-glucosamine + holo-[ACP]. The protein operates within glycolipid biosynthesis; lipid IV(A) biosynthesis; lipid IV(A) from (3R)-3-hydroxytetradecanoyl-[acyl-carrier-protein] and UDP-N-acetyl-alpha-D-glucosamine: step 1/6. Involved in the biosynthesis of lipid A, a phosphorylated glycolipid that anchors the lipopolysaccharide to the outer membrane of the cell. This Pseudomonas putida (strain W619) protein is Acyl-[acyl-carrier-protein]--UDP-N-acetylglucosamine O-acyltransferase.